The chain runs to 514 residues: Bifunctional purine biosynthesis protein PurH (514 aa).

An MGS-like domain is found at 1–145 (MIKRALISVS…KNYQDVVVIV (145 aa)).

It belongs to the PurH family.

It catalyses the reaction (6R)-10-formyltetrahydrofolate + 5-amino-1-(5-phospho-beta-D-ribosyl)imidazole-4-carboxamide = 5-formamido-1-(5-phospho-D-ribosyl)imidazole-4-carboxamide + (6S)-5,6,7,8-tetrahydrofolate. The enzyme catalyses IMP + H2O = 5-formamido-1-(5-phospho-D-ribosyl)imidazole-4-carboxamide. The protein operates within purine metabolism; IMP biosynthesis via de novo pathway; 5-formamido-1-(5-phospho-D-ribosyl)imidazole-4-carboxamide from 5-amino-1-(5-phospho-D-ribosyl)imidazole-4-carboxamide (10-formyl THF route): step 1/1. It participates in purine metabolism; IMP biosynthesis via de novo pathway; IMP from 5-formamido-1-(5-phospho-D-ribosyl)imidazole-4-carboxamide: step 1/1. This chain is Bifunctional purine biosynthesis protein PurH, found in Acetivibrio thermocellus (strain ATCC 27405 / DSM 1237 / JCM 9322 / NBRC 103400 / NCIMB 10682 / NRRL B-4536 / VPI 7372) (Clostridium thermocellum).